Consider the following 369-residue polypeptide: 1-aminocyclopropane-1-carboxylate oxidase homolog 3 (369 aa).

Residues 217–318 (KGLLMLSHYY…VSVACFFTTG (102 aa)) form the Fe2OG dioxygenase domain. Fe cation contacts are provided by His-241, Asp-243, and His-297.

This sequence belongs to the iron/ascorbate-dependent oxidoreductase family. Requires Fe cation as cofactor.

This is 1-aminocyclopropane-1-carboxylate oxidase homolog 3 from Arabidopsis thaliana (Mouse-ear cress).